A 305-amino-acid chain; its full sequence is Nucleotide-binding protein Rxyl_2009 (305 aa).

24–31 (GLSGAGKS) serves as a coordination point for ATP. 75 to 78 (DIRG) provides a ligand contact to GTP.

The protein belongs to the RapZ-like family.

Functionally, displays ATPase and GTPase activities. The sequence is that of Nucleotide-binding protein Rxyl_2009 from Rubrobacter xylanophilus (strain DSM 9941 / JCM 11954 / NBRC 16129 / PRD-1).